A 361-amino-acid chain; its full sequence is Tetrathionate reductase subunit C (361 aa).

9 helical membrane passes run 26–46 (FSYA…LALL), 53–73 (AIPM…LGPL), 104–124 (ALYG…FALL), 160–180 (LAAI…MLFF), 193–213 (LMLP…ALIL), 233–253 (GAAA…WGMW), 258–278 (FAAV…TFIL), 288–308 (ITPI…WNLI), and 334–354 (AVSP…IFPM).

The protein belongs to the NrfD family. In terms of assembly, probably composed of three subunits: TtrA, TtrB and TtrC.

Its subcellular location is the cell membrane. Its function is as follows. Part of a membrane-bound tetrathionate reductase that catalyzes the reduction of tetrathionate to thiosulfate. TtrC probably anchors TtrA and TtrB to the external face of the cytoplasmic membrane. May transfer electrons from membrane quinol to TtrB. This chain is Tetrathionate reductase subunit C (ttrC), found in Archaeoglobus fulgidus (strain ATCC 49558 / DSM 4304 / JCM 9628 / NBRC 100126 / VC-16).